Reading from the N-terminus, the 106-residue chain is Replication restart protein PriB (106 aa).

The SSB domain occupies 4–103 (MNRLVLSGTV…LHAEQIELID (100 aa)).

This sequence belongs to the PriB family. As to quaternary structure, homodimer. Interacts with PriA and DnaT. Component of the replication restart primosome. Primosome assembly occurs via a 'hand-off' mechanism. PriA binds to replication forks, subsequently PriB then DnaT bind; DnaT then displaces ssDNA to generate the helicase loading substrate.

Its function is as follows. Involved in the restart of stalled replication forks, which reloads the replicative helicase on sites other than the origin of replication; the PriA-PriB pathway is the major replication restart pathway. During primosome assembly it facilitates complex formation between PriA and DnaT on DNA; stabilizes PriA on DNA. Stimulates the DNA unwinding activity of PriA helicase. This chain is Replication restart protein PriB, found in Pectobacterium atrosepticum (strain SCRI 1043 / ATCC BAA-672) (Erwinia carotovora subsp. atroseptica).